A 466-amino-acid chain; its full sequence is Collagenase 3 (466 aa).

Residues 1–13 (ATFFLLSWTHCWS) form the signal peptide. A propeptide spans 14-98 (LPLPYGDDDD…PRCGVPDVGV (85 aa)) (activation peptide). Residues 89-96 (PRCGVPDV) carry the Cysteine switch motif. A Zn(2+)-binding site is contributed by Cys-91. Asn-112 carries N-linked (GlcNAc...) asparagine glycosylation. Residue Asp-123 coordinates Ca(2+). A glycan (N-linked (GlcNAc...) asparagine) is linked at Asn-147. Asp-157 is a Ca(2+) binding site. His-167 and Asp-169 together coordinate Zn(2+). The tract at residues 171–241 (YPFDGPSGLL…GALMFPIYTY (71 aa)) is interaction with TIMP2. 4 residues coordinate Ca(2+): Asp-174, Gly-175, Ser-177, and Leu-179. Residue His-182 coordinates Zn(2+). Ca(2+) contacts are provided by Asn-189, Gly-191, and Asp-193. His-195 contacts Zn(2+). Ca(2+)-binding residues include Asp-197, Asp-198, and Glu-200. Residue His-217 participates in Zn(2+) binding. Glu-218 is a catalytic residue. Zn(2+)-binding residues include His-221, His-227, and Met-235. The segment at 258-279 (QSLYGPGDEDPNPKHPKTPEKC) is disordered. Residues 263–466 (PGDEDPNPKH…VMPTNSLLWC (204 aa)) form an interaction with collagen region. The segment covering 268-279 (PNPKHPKTPEKC) has biased composition (basic and acidic residues). Hemopexin repeat units follow at residues 276–325 (PEKC…WPEL), 326–372 (PNHV…GFPK), 374–422 (VKRL…FPGI), and 423–466 (GDKV…LLWC). A disulfide bond links Cys-279 and Cys-466. Ca(2+)-binding residues include Asp-286, Ile-288, Asp-330, and Ala-332. Residue Tyr-361 is modified to Phosphotyrosine; by PKDCC. Ca(2+)-binding residues include Ser-378 and Ala-380. An N-linked (GlcNAc...) asparagine glycan is attached at Asn-404. 2 residues coordinate Ca(2+): Asp-427 and Val-429.

The protein belongs to the peptidase M10A family. Requires Ca(2+) as cofactor. It depends on Zn(2+) as a cofactor. In terms of processing, the proenzyme is activated by removal of the propeptide; this cleavage can be effected by other matrix metalloproteinases, such as MMP2, MMP3 and MMP14 and may involve several cleavage steps. Cleavage can also be autocatalytic, after partial maturation by another protease or after treatment with 4-aminophenylmercuric acetate (APMA) (in vitro). N-glycosylated. Post-translationally, tyrosine phosphorylated by PKDCC/VLK.

It is found in the secreted. The protein resides in the extracellular space. It localises to the extracellular matrix. Its function is as follows. Plays a role in the degradation of extracellular matrix proteins including fibrillar collagen, fibronectin, TNC and ACAN. Cleaves triple helical collagens, including type I, type II and type III collagen, but has the highest activity with soluble type II collagen. Can also degrade collagen type IV, type XIV and type X. May also function by activating or degrading key regulatory proteins, such as TGFB1 and CCN2. Plays a role in wound healing, tissue remodeling, cartilage degradation, bone development, bone mineralization and ossification. Required for normal embryonic bone development and ossification. Plays a role in the healing of bone fractures via endochondral ossification. Plays a role in wound healing, probably by a mechanism that involves proteolytic activation of TGFB1 and degradation of CCN2. Plays a role in keratinocyte migration during wound healing. May play a role in cell migration and in tumor cell invasion. The chain is Collagenase 3 (Mmp13) from Rattus norvegicus (Rat).